The chain runs to 405 residues: Tyrosine--tRNA ligase (405 aa).

Tyrosine 35 lines the L-tyrosine pocket. Positions 40 to 49 match the 'HIGH' region motif; that stretch reads TTSSSLHIGH. Residues tyrosine 166 and glutamine 170 each contribute to the L-tyrosine site. Positions 226 to 230 match the 'KMSKS' region motif; sequence KMGKS. Lysine 229 serves as a coordination point for ATP. One can recognise an S4 RNA-binding domain in the interval 340-404; sequence ILLIDLMLDS…VGKKKFLRIV (65 aa).

Belongs to the class-I aminoacyl-tRNA synthetase family. TyrS type 1 subfamily. As to quaternary structure, homodimer.

Its subcellular location is the cytoplasm. It carries out the reaction tRNA(Tyr) + L-tyrosine + ATP = L-tyrosyl-tRNA(Tyr) + AMP + diphosphate + H(+). Functionally, catalyzes the attachment of tyrosine to tRNA(Tyr) in a two-step reaction: tyrosine is first activated by ATP to form Tyr-AMP and then transferred to the acceptor end of tRNA(Tyr). In Borrelia garinii subsp. bavariensis (strain ATCC BAA-2496 / DSM 23469 / PBi) (Borreliella bavariensis), this protein is Tyrosine--tRNA ligase.